Reading from the N-terminus, the 873-residue chain is MKYLSPLSLSDTQLNITELKQQLTLFSQYQINAFHQHKAVSDLVFERSHYFDQLLSRLWQFFKFDDIANTSLIAVGGYGRSELHPLSDIDILILTENNTNDTFCQKVGELVTLLWDLKLEIGHSVRSIAECIEIGQNDLTVATNLQEARYICGNKELSHQLKLKIHSDSFWPSESFYQAKIDEQKKRHSRYHDTTYNLEPDIKSSPGGLRDIHTLSWIARRHFGATSLLEMSQAGFLTDAEYRELLECQEFLWRVRFALHIELKRYDNRLTFGHQASVAEHLGFIGEGNRGVERMMKEFYRTLRRVAELNSMLLKIFDQAILHQGEQDDAIIIDDDFQRRGRLIEARKPALFQARPDTILDMFLLMANDSTIDGVAPPTMRQLRTARRRLNRFLCEIPEAKEKFLQLTQHPNALNNAFSSMHKLGVLSAYLPQWSHIVGQMQFDLFHAYTVDEHSIRLLKHINKFSDTTNRDKHPICCEIFPKIMKKELLIIAAIFHDIAKGRGGDHSELGAVDAYDFCISHGLSKPEANLVSWLVKSHLLMSVTAQRRDIYDPDVITEFAKQVRDEERLDYLVCLTVADICATNPDLWNSWKRSLIADLYNATQRALRRGLENPPDLRDRIRHNQQMASAQLRSEGFTQWEVDALWRRFKADYFLRHTHKQIAWHASHLLRHQDKEKSLILISKNASRGGTEIFVYSKDQPHLFATVAAELDRRSITIYDAQVMSSKDGYALDTFMVLDQNDDPIDEERQQRLIDQLYDVKLNDQATHIKTRRPPRQLQHFNVKTRMEFLPTKTGKRTLMEFVALDTPGLLATVGATFAQLGINLHAAKITTIGERAEDLFILTSDVGGRLDDDKQAELEIALVKNVARLSS.

The tract at residues 1-332 (MKYLSPLSLS…HQGEQDDAII (332 aa)) is uridylyltransferase. Positions 333-692 (IDDDFQRRGR…ISKNASRGGT (360 aa)) are uridylyl-removing. Residues 451-573 (VDEHSIRLLK…VRDEERLDYL (123 aa)) form the HD domain. 2 consecutive ACT domains span residues 693–777 (EIFV…RPPR) and 800–873 (LMEF…RLSS).

Belongs to the GlnD family. It depends on Mg(2+) as a cofactor.

It catalyses the reaction [protein-PII]-L-tyrosine + UTP = [protein-PII]-uridylyl-L-tyrosine + diphosphate. The catalysed reaction is [protein-PII]-uridylyl-L-tyrosine + H2O = [protein-PII]-L-tyrosine + UMP + H(+). With respect to regulation, uridylyltransferase (UTase) activity is inhibited by glutamine, while glutamine activates uridylyl-removing (UR) activity. Functionally, modifies, by uridylylation and deuridylylation, the PII regulatory proteins (GlnB and homologs), in response to the nitrogen status of the cell that GlnD senses through the glutamine level. Under low glutamine levels, catalyzes the conversion of the PII proteins and UTP to PII-UMP and PPi, while under higher glutamine levels, GlnD hydrolyzes PII-UMP to PII and UMP (deuridylylation). Thus, controls uridylylation state and activity of the PII proteins, and plays an important role in the regulation of nitrogen assimilation and metabolism. This Aliivibrio fischeri (strain MJ11) (Vibrio fischeri) protein is Bifunctional uridylyltransferase/uridylyl-removing enzyme.